The primary structure comprises 229 residues: uncharacterized protein (229 aa).

The interval 61-229 (MQAEDKVSKP…TESEDKPKRG (169 aa)) is disordered. Residues 109–128 (QQEKQQPEKAVVEQQEKQQP) are compositionally biased toward basic and acidic residues. A compositionally biased stretch (low complexity) spans 166–194 (QPEQPERQQQAQPERQQQAQPERQQQAQP). Over residues 195–204 (EEAEDAEQEP) the composition is skewed to acidic residues. Positions 218–229 (TQTESEDKPKRG) are enriched in basic and acidic residues.

This is an uncharacterized protein from Frog virus 3 (isolate Goorha) (FV-3).